A 523-amino-acid chain; its full sequence is Membrane protein PTM1 (523 aa).

The first 26 residues, 1 to 26 (MRVYQFCRPFQLFTYFLCYLLVFVKA), serve as a signal peptide directing secretion. Residues 27–197 (NKEKISQKNY…LAGTEINKLP (171 aa)) are Lumenal-facing. N-linked (GlcNAc...) asparagine glycosylation occurs at Asn132. The chain crosses the membrane as a helical span at residues 198 to 218 (LYGLLAVAYVVAMALYSFAFW). Residues 219–230 (KHKHELLPLQKY) lie on the Cytoplasmic side of the membrane. Residues 231-251 (LLAFFVFLTAETIFVWAYYDL) form a helical membrane-spanning segment. Residues 252–265 (KNEKGDTAGIKVYM) are Lumenal-facing. Residues 266-286 (VFLSILTAGKVTFSFFLLLII) traverse the membrane as a helical segment. Residues 287–304 (ALGYGIVYPKLNKTLMRR) are Cytoplasmic-facing. The helical transmembrane segment at 305–325 (CQMYGALTYAICIGFLIQSYL) threads the bilayer. At 326–333 (TDMEAPSP) the chain is on the lumenal side. A helical transmembrane segment spans residues 334–354 (LILITLIPMALALIIFYYMII). Residues 355–381 (RSMTKTVIYLKEQRQIVKLNMYKKLLY) lie on the Cytoplasmic side of the membrane. A helical membrane pass occupies residues 382–402 (IIYASFLSVLAGSIVSSFIYV). Residues 403–417 (GMNTIDMIEKNWRSR) are Lumenal-facing. A helical membrane pass occupies residues 418-438 (FFVTDFWPTLVYFIVFVTIAF). The Cytoplasmic segment spans residues 439 to 523 (LWRPTDTSYM…HGPVSPSPTK (85 aa)). Residue Ser480 is modified to Phosphoserine. Phosphothreonine occurs at positions 483 and 498. The tract at residues 483–523 (TGERGIDEDDLNLNFTDDEEGHDNVNNHSQGHGPVSPSPTK) is disordered. Residues 488 to 503 (IDEDDLNLNFTDDEEG) show a composition bias toward acidic residues.

It belongs to the LU7TM family.

The protein resides in the golgi apparatus membrane. It is found in the early endosome membrane. This is Membrane protein PTM1 (PTM1) from Saccharomyces cerevisiae (strain YJM789) (Baker's yeast).